The following is a 140-amino-acid chain: Large ribosomal subunit protein uL11 (140 aa).

It belongs to the universal ribosomal protein uL11 family. Part of the ribosomal stalk of the 50S ribosomal subunit. Interacts with L10 and the large rRNA to form the base of the stalk. L10 forms an elongated spine to which L12 dimers bind in a sequential fashion forming a multimeric L10(L12)X complex. In terms of processing, one or more lysine residues are methylated.

In terms of biological role, forms part of the ribosomal stalk which helps the ribosome interact with GTP-bound translation factors. In Desulforapulum autotrophicum (strain ATCC 43914 / DSM 3382 / VKM B-1955 / HRM2) (Desulfobacterium autotrophicum), this protein is Large ribosomal subunit protein uL11.